The following is a 124-amino-acid chain: Phosphoribosyl-ATP pyrophosphatase (124 aa).

The protein belongs to the PRA-PH family.

Its subcellular location is the cytoplasm. It catalyses the reaction 1-(5-phospho-beta-D-ribosyl)-ATP + H2O = 1-(5-phospho-beta-D-ribosyl)-5'-AMP + diphosphate + H(+). It functions in the pathway amino-acid biosynthesis; L-histidine biosynthesis; L-histidine from 5-phospho-alpha-D-ribose 1-diphosphate: step 2/9. In Ralstonia pickettii (strain 12J), this protein is Phosphoribosyl-ATP pyrophosphatase.